The primary structure comprises 396 residues: Protein ANTAGONIST OF LIKE HETEROCHROMATIN PROTEIN 1 (396 aa).

2 stretches are compositionally biased toward basic residues: residues methionine 1–lysine 12 and lysine 20–arginine 29. Positions methionine 1 to arginine 29 are disordered. A Nuclear localization signal motif is present at residues glutamine 6–lysine 13. The 166-residue stretch at isoleucine 183–asparagine 348 folds into the DDE Tnp4 domain.

It belongs to the HARBI1 family. In terms of assembly, interacts with core components of POLYCOMB REPRESSIVE COMPLEX 2 (PRC2), a PcG protein complex with H3K27me3 histone methyltransferase activity. Associates with plant-specific PRC2 accessory components such as MSI1, EMF2, VRN2, FIE and CLF. Requires a divalent metal cation as cofactor. As to expression, expressed in roots, inflorescence stems, seedlings, leaves, flower buds, inflorescences, and siliques.

It is found in the nucleus. In terms of biological role, transposase-derived protein that may have nuclease activity. Antagonist of polycomb-group (PcG) protein-mediated chromatin silencing, probably by preventing the association of POLYCOMB REPRESSIVE COMPLEX 2 (PRC2) with its accessory components. Needed for full reactivation of several floral homeotic genes that are repressed by PcG. This Arabidopsis thaliana (Mouse-ear cress) protein is Protein ANTAGONIST OF LIKE HETEROCHROMATIN PROTEIN 1.